The primary structure comprises 346 residues: Biotin synthase (346 aa).

The Radical SAM core domain maps to 41–265 (NEVQISTLLS…MMPHSYVRLS (225 aa)). Positions 56, 60, and 63 each coordinate [4Fe-4S] cluster. 4 residues coordinate [2Fe-2S] cluster: C100, C131, C191, and R263.

The protein belongs to the radical SAM superfamily. Biotin synthase family. As to quaternary structure, homodimer. [4Fe-4S] cluster is required as a cofactor. [2Fe-2S] cluster serves as cofactor.

The catalysed reaction is (4R,5S)-dethiobiotin + (sulfur carrier)-SH + 2 reduced [2Fe-2S]-[ferredoxin] + 2 S-adenosyl-L-methionine = (sulfur carrier)-H + biotin + 2 5'-deoxyadenosine + 2 L-methionine + 2 oxidized [2Fe-2S]-[ferredoxin]. The protein operates within cofactor biosynthesis; biotin biosynthesis; biotin from 7,8-diaminononanoate: step 2/2. Functionally, catalyzes the conversion of dethiobiotin (DTB) to biotin by the insertion of a sulfur atom into dethiobiotin via a radical-based mechanism. This Pseudoalteromonas translucida (strain TAC 125) protein is Biotin synthase.